An 834-amino-acid polypeptide reads, in one-letter code: Periplasmic nitrate reductase (834 aa).

Positions Met1–Ala31 form a signal peptide, tat-type signal. Residues Ile43 to Asp99 form the 4Fe-4S Mo/W bis-MGD-type domain. Residues Cys50, Cys53, Cys57, and Cys85 each contribute to the [4Fe-4S] cluster site. Residues Lys87, Gln154, Asn179, Cys183, Trp216–Met223, Ser247–His251, Gly266–Asp268, Met377, Gln381, Asn487, Ser513–Asp514, Lys536, Asp563, and Thr723–Ser732 each bind Mo-bis(molybdopterin guanine dinucleotide). Trp799 contributes to the substrate binding site. The Mo-bis(molybdopterin guanine dinucleotide) site is built by Asn807 and Lys824.

It belongs to the prokaryotic molybdopterin-containing oxidoreductase family. NasA/NapA/NarB subfamily. In terms of assembly, component of the periplasmic nitrate reductase NapAB complex composed of NapA and NapB. It depends on [4Fe-4S] cluster as a cofactor. Mo-bis(molybdopterin guanine dinucleotide) is required as a cofactor. Predicted to be exported by the Tat system. The position of the signal peptide cleavage has not been experimentally proven.

The protein resides in the periplasm. The catalysed reaction is 2 Fe(II)-[cytochrome] + nitrate + 2 H(+) = 2 Fe(III)-[cytochrome] + nitrite + H2O. In terms of biological role, catalytic subunit of the periplasmic nitrate reductase complex NapAB. Receives electrons from NapB and catalyzes the reduction of nitrate to nitrite. The protein is Periplasmic nitrate reductase of Rhizobium meliloti (strain 1021) (Ensifer meliloti).